Reading from the N-terminus, the 295-residue chain is Acetylglutamate kinase (295 aa).

Substrate is bound by residues 66–67, Arg88, and Asn193; that span reads GG.

Belongs to the acetylglutamate kinase family. ArgB subfamily.

It localises to the cytoplasm. It carries out the reaction N-acetyl-L-glutamate + ATP = N-acetyl-L-glutamyl 5-phosphate + ADP. The protein operates within amino-acid biosynthesis; L-arginine biosynthesis; N(2)-acetyl-L-ornithine from L-glutamate: step 2/4. Catalyzes the ATP-dependent phosphorylation of N-acetyl-L-glutamate. This chain is Acetylglutamate kinase, found in Allorhizobium ampelinum (strain ATCC BAA-846 / DSM 112012 / S4) (Agrobacterium vitis (strain S4)).